A 99-amino-acid polypeptide reads, in one-letter code: NADH-ubiquinone oxidoreductase chain 4L (99 aa).

The next 3 helical transmembrane spans lie at 4–24, 29–49, and 63–83; these read MFLMFYLSMIMFLFGCMVFVS, LLSTLLSLEYMVLSLFIFLFF, and FFLTFCVCEGVLGLSILVSMI.

This sequence belongs to the complex I subunit 4L family.

It localises to the mitochondrion membrane. The enzyme catalyses a ubiquinone + NADH + 5 H(+)(in) = a ubiquinol + NAD(+) + 4 H(+)(out). Functionally, core subunit of the mitochondrial membrane respiratory chain NADH dehydrogenase (Complex I) that is believed to belong to the minimal assembly required for catalysis. Complex I functions in the transfer of electrons from NADH to the respiratory chain. The immediate electron acceptor for the enzyme is believed to be ubiquinone. This is NADH-ubiquinone oxidoreductase chain 4L (mt:ND4L) from Anopheles gambiae (African malaria mosquito).